The primary structure comprises 129 residues: 3-aminoacrylate deaminase RutC (129 aa).

The protein belongs to the RutC family.

The enzyme catalyses (Z)-3-aminoacrylate + H2O + H(+) = 3-oxopropanoate + NH4(+). Its function is as follows. Involved in pyrimidine catabolism. Catalyzes the deamination of 3-aminoacrylate to malonic semialdehyde, a reaction that can also occur spontaneously. RutC may facilitate the reaction and modulate the metabolic fitness, rather than catalyzing essential functions. The polypeptide is 3-aminoacrylate deaminase RutC (Yersinia enterocolitica serotype O:8 / biotype 1B (strain NCTC 13174 / 8081)).